A 65-amino-acid chain; its full sequence is MKKGTKVIVQRDETKYPARGTWRWFRGKKGVVVTGLIGGDEYGVSFSKGDSADAYFKAYELTERK.

The polypeptide is Gene 51 protein (51) (Mycobacterium phage D29 (Mycobacteriophage D29)).